Reading from the N-terminus, the 445-residue chain is Peptide chain release factor 1, mitochondrial (445 aa).

The N-terminal 61 residues, 1–61 (MNRHLCVWLF…LLSKNWSRRY (61 aa)), are a transit peptide targeting the mitochondrion. The interval 297–361 (PKDLRIDTFR…LRARLYQQII (65 aa)) is GGQ domain. Positions 311–313 (GGQ) match the GGQ motif. An N5-methylglutamine modification is found at Q313.

The protein belongs to the prokaryotic/mitochondrial release factor family. Methylation of glutamine in the GGQ triplet by HEMK1 is conserved from bacteria to mammals.

It localises to the mitochondrion. Its function is as follows. Mitochondrial peptide chain release factor that directs the termination of translation in response to the peptide chain non-canonical stop codons AGG and AGA. Non-canonical termination codons AGG and AGA are found at the end of MT-CO1/COX1 and MT-ND6/ND6 open reading frames, respectively. Recognizes non-canonical stop codons via a network of interactions between the codon, MTRF1 and the ribosomal RNA (rRNA): in contrast to other translation release factors, which identify the codon in the A-site via direct interactions of amino acid side chains with the bases, MTRF1 repositions the first 2 bases of the stop codon to use an intricate network of interactions that includes residues of the release factor, the rRNA of the small ribosomal subunit, as well as neighboring bases of the mRNA. In Homo sapiens (Human), this protein is Peptide chain release factor 1, mitochondrial.